The chain runs to 313 residues: MNNENNFSVFSGTNSRYLAEKICNSLGCPLGRMNIEHFADGEFAVSYEESIRGRDVFLVQSTFPSSDNLMELLLMIDAAKRASAHYITAVIPYFGWARQDRKDKPRVSIGAKLIADLLSKAGITRLITMDLHADQIQGFFDVPVDHLYGSTVFMEYIRKNMPLENLVVATPDVGGTKRANSYAKHLGVPMVICHKSRLKANEIAEMRIIGDVQDKDVLLVDDIVDTAGTITKAADLMKENGARSVCAIASHAVMSDPASMRVDQSTLKEMIFTDSIPYPHKCEKVKILSVADLFAEAIKRVCSHESITTLYYF.

ATP is bound by residues 40 to 42 and 98 to 99; these read DGE and RQ. Mg(2+) is bound by residues His-132 and Asp-172. Residue Lys-195 is part of the active site. D-ribose 5-phosphate is bound by residues Arg-197, Asp-221, and 225–229; that span reads DTAGT.

This sequence belongs to the ribose-phosphate pyrophosphokinase family. Class I subfamily. In terms of assembly, homohexamer. It depends on Mg(2+) as a cofactor.

Its subcellular location is the cytoplasm. The enzyme catalyses D-ribose 5-phosphate + ATP = 5-phospho-alpha-D-ribose 1-diphosphate + AMP + H(+). Its pathway is metabolic intermediate biosynthesis; 5-phospho-alpha-D-ribose 1-diphosphate biosynthesis; 5-phospho-alpha-D-ribose 1-diphosphate from D-ribose 5-phosphate (route I): step 1/1. Its function is as follows. Involved in the biosynthesis of the central metabolite phospho-alpha-D-ribosyl-1-pyrophosphate (PRPP) via the transfer of pyrophosphoryl group from ATP to 1-hydroxyl of ribose-5-phosphate (Rib-5-P). This is Ribose-phosphate pyrophosphokinase from Porphyromonas gingivalis (strain ATCC BAA-308 / W83).